The primary structure comprises 124 residues: Putative membrane protein insertion efficiency factor (124 aa).

It belongs to the UPF0161 family.

It localises to the cell inner membrane. Its function is as follows. Could be involved in insertion of integral membrane proteins into the membrane. This Psychrobacter arcticus (strain DSM 17307 / VKM B-2377 / 273-4) protein is Putative membrane protein insertion efficiency factor.